The following is a 70-amino-acid chain: Cold shock-like protein CspA (70 aa).

The 61-residue stretch at 7–67 (GSVKWFNETK…GKKGPQAAQV (61 aa)) folds into the CSD domain.

It localises to the cytoplasm. The protein is Cold shock-like protein CspA (cspA) of Vibrio cholerae serotype O1 (strain ATCC 39315 / El Tor Inaba N16961).